Here is a 211-residue protein sequence, read N- to C-terminus: Ribonuclease MRP protein subunit rmp1 (211 aa).

The helical transmembrane segment at Pro-73–Ile-93 threads the bilayer. Residue Ser-156 is modified to Phosphoserine. The tract at residues Ser-178–Gly-211 is disordered. Positions Thr-181 to Lys-201 are enriched in basic residues.

Component of RNase MRP complex which consists of an RNA moiety and at least 10 protein subunits.

The protein resides in the membrane. The protein localises to the nucleus. It localises to the nucleolus. In terms of biological role, functions as part of ribonuclease MRP (RNase MRP), which is involved in rRNA processing in mitochondria. The sequence is that of Ribonuclease MRP protein subunit rmp1 from Schizosaccharomyces pombe (strain 972 / ATCC 24843) (Fission yeast).